The chain runs to 195 residues: Putative Tricorn-like protease N-terminal subunit (195 aa).

This sequence belongs to the peptidase S41B family.

It is found in the cytoplasm. Degrades oligopeptides in a sequential manner. In Sulfurisphaera tokodaii (strain DSM 16993 / JCM 10545 / NBRC 100140 / 7) (Sulfolobus tokodaii), this protein is Putative Tricorn-like protease N-terminal subunit (triN).